Reading from the N-terminus, the 303-residue chain is Glycine--tRNA ligase alpha subunit (303 aa).

It belongs to the class-II aminoacyl-tRNA synthetase family. As to quaternary structure, tetramer of two alpha and two beta subunits.

The protein resides in the cytoplasm. The enzyme catalyses tRNA(Gly) + glycine + ATP = glycyl-tRNA(Gly) + AMP + diphosphate. This Salmonella agona (strain SL483) protein is Glycine--tRNA ligase alpha subunit.